The sequence spans 794 residues: Phenylalanine--tRNA ligase beta subunit (794 aa).

The tRNA-binding domain maps to 40–158; the sequence is NSLNSELILG…LKKYIGSDVK (119 aa). The B5 domain maps to 402-477; sequence KNKQSLEIKL…RLYSYDKIDE (76 aa). The Mg(2+) site is built by Asp455, Asp461, Glu464, and Glu465. Positions 702-794 constitute an FDX-ACB domain; that stretch reads SKFQSSSRDL…NIKQMKVVIR (93 aa).

Belongs to the phenylalanyl-tRNA synthetase beta subunit family. Type 1 subfamily. In terms of assembly, tetramer of two alpha and two beta subunits. Requires Mg(2+) as cofactor.

The protein localises to the cytoplasm. The enzyme catalyses tRNA(Phe) + L-phenylalanine + ATP = L-phenylalanyl-tRNA(Phe) + AMP + diphosphate + H(+). This Mycoplasma mycoides subsp. mycoides SC (strain CCUG 32753 / NCTC 10114 / PG1) protein is Phenylalanine--tRNA ligase beta subunit.